The chain runs to 192 residues: Ribosomal RNA small subunit methyltransferase G (192 aa).

Residues G63, L68, 112 to 113, and R125 contribute to the S-adenosyl-L-methionine site; that span reads IE.

It belongs to the methyltransferase superfamily. RNA methyltransferase RsmG family.

It localises to the cytoplasm. It carries out the reaction guanosine(527) in 16S rRNA + S-adenosyl-L-methionine = N(7)-methylguanosine(527) in 16S rRNA + S-adenosyl-L-homocysteine. Its function is as follows. Specifically methylates the N7 position of guanine in position 527 of 16S rRNA. The chain is Ribosomal RNA small subunit methyltransferase G from Rickettsia rickettsii (strain Iowa).